The chain runs to 63 residues: Potassium channel toxin Sp4 (63 aa).

A signal peptide spans 1-20 (MNKVHFALFLLVLTVLAVSG). Intrachain disulfides connect Cys31–Cys53, Cys38–Cys58, and Cys42–Cys60.

Belongs to the long chain scorpion toxin family. Class 2 subfamily. As to expression, expressed by the venom gland.

Its subcellular location is the secreted. This recombinant toxin selectively inhibits mouse voltage-gated potassium channel Kv1.3/KCNA3 (IC(50)=24.73 nM). This chain is Potassium channel toxin Sp4, found in Scorpiops pococki (Scorpion).